The primary structure comprises 156 residues: ATP synthase subunit b (156 aa).

The chain crosses the membrane as a helical span at residues 7–27 (LIGQTVAFIIFVWFCMKFVWP).

This sequence belongs to the ATPase B chain family. F-type ATPases have 2 components, F(1) - the catalytic core - and F(0) - the membrane proton channel. F(1) has five subunits: alpha(3), beta(3), gamma(1), delta(1), epsilon(1). F(0) has three main subunits: a(1), b(2) and c(10-14). The alpha and beta chains form an alternating ring which encloses part of the gamma chain. F(1) is attached to F(0) by a central stalk formed by the gamma and epsilon chains, while a peripheral stalk is formed by the delta and b chains.

It is found in the cell inner membrane. F(1)F(0) ATP synthase produces ATP from ADP in the presence of a proton or sodium gradient. F-type ATPases consist of two structural domains, F(1) containing the extramembraneous catalytic core and F(0) containing the membrane proton channel, linked together by a central stalk and a peripheral stalk. During catalysis, ATP synthesis in the catalytic domain of F(1) is coupled via a rotary mechanism of the central stalk subunits to proton translocation. In terms of biological role, component of the F(0) channel, it forms part of the peripheral stalk, linking F(1) to F(0). This Shewanella baltica (strain OS155 / ATCC BAA-1091) protein is ATP synthase subunit b.